Reading from the N-terminus, the 441-residue chain is 3-phosphoshikimate 1-carboxyvinyltransferase (441 aa).

The segment at M1 to G21 is disordered. 3-phosphoshikimate-binding residues include K29, S30, and R34. K29 contributes to the phosphoenolpyruvate binding site. The phosphoenolpyruvate site is built by G103 and R132. Residues S177, Q179, D328, and K355 each coordinate 3-phosphoshikimate. A phosphoenolpyruvate-binding site is contributed by Q179. D328 (proton acceptor) is an active-site residue. R359 and R401 together coordinate phosphoenolpyruvate.

This sequence belongs to the EPSP synthase family. As to quaternary structure, monomer.

It is found in the cytoplasm. The catalysed reaction is 3-phosphoshikimate + phosphoenolpyruvate = 5-O-(1-carboxyvinyl)-3-phosphoshikimate + phosphate. It functions in the pathway metabolic intermediate biosynthesis; chorismate biosynthesis; chorismate from D-erythrose 4-phosphate and phosphoenolpyruvate: step 6/7. In terms of biological role, catalyzes the transfer of the enolpyruvyl moiety of phosphoenolpyruvate (PEP) to the 5-hydroxyl of shikimate-3-phosphate (S3P) to produce enolpyruvyl shikimate-3-phosphate and inorganic phosphate. The chain is 3-phosphoshikimate 1-carboxyvinyltransferase from Parasynechococcus marenigrum (strain WH8102).